A 266-amino-acid polypeptide reads, in one-letter code: Nickel import ATP-binding protein NikE (266 aa).

Residues 4–252 (ISADNIVKIY…RHPASRLLRE (249 aa)) form the ABC transporter domain. 45-52 (GRSGCGKS) is a binding site for ATP.

This sequence belongs to the ABC transporter superfamily. Nickel importer (TC 3.A.1.5.3) family. The complex is composed of two ATP-binding proteins (NikD and NikE), two transmembrane proteins (NikB and NikC) and a solute-binding protein (NikA).

It localises to the cell inner membrane. The catalysed reaction is Ni(2+)(out) + ATP + H2O = Ni(2+)(in) + ADP + phosphate + H(+). Part of the ABC transporter complex NikABCDE involved in nickel import. Responsible for energy coupling to the transport system. This is Nickel import ATP-binding protein NikE from Brucella suis biovar 1 (strain 1330).